Consider the following 498-residue polypeptide: Pyridine nucleotide-disulfide oxidoreductase domain-containing protein 1 (498 aa).

The residue at position 1 (M1) is an N-acetylmethionine.

Belongs to the class-I pyridine nucleotide-disulfide oxidoreductase family. PYROXD1 subfamily. FAD serves as cofactor.

The protein resides in the nucleus. It is found in the cytoplasm. Its subcellular location is the myofibril. The protein localises to the sarcomere. Probable FAD-dependent oxidoreductase; involved in the cellular oxidative stress response. Required for normal sarcomere structure and muscle fiber integrity. This Rattus norvegicus (Rat) protein is Pyridine nucleotide-disulfide oxidoreductase domain-containing protein 1 (Pyroxd1).